Consider the following 667-residue polypeptide: DNA ligase (667 aa).

Residues 34 to 38, 83 to 84, and Glu-112 contribute to the NAD(+) site; these read DSEYD and SL. Catalysis depends on Lys-114, which acts as the N6-AMP-lysine intermediate. Positions 135, 169, 285, and 309 each coordinate NAD(+). Residues Cys-403, Cys-406, Cys-421, and Cys-426 each coordinate Zn(2+). Residues 589 to 667 form the BRCT domain; sequence ASDSYFAGKT…EARLISELKK (79 aa).

The protein belongs to the NAD-dependent DNA ligase family. LigA subfamily. Requires Mg(2+) as cofactor. Mn(2+) is required as a cofactor.

It carries out the reaction NAD(+) + (deoxyribonucleotide)n-3'-hydroxyl + 5'-phospho-(deoxyribonucleotide)m = (deoxyribonucleotide)n+m + AMP + beta-nicotinamide D-nucleotide.. DNA ligase that catalyzes the formation of phosphodiester linkages between 5'-phosphoryl and 3'-hydroxyl groups in double-stranded DNA using NAD as a coenzyme and as the energy source for the reaction. It is essential for DNA replication and repair of damaged DNA. The chain is DNA ligase from Bacillus licheniformis (strain ATCC 14580 / DSM 13 / JCM 2505 / CCUG 7422 / NBRC 12200 / NCIMB 9375 / NCTC 10341 / NRRL NRS-1264 / Gibson 46).